The following is a 2319-amino-acid chain: Coagulation factor VIII (2319 aa).

An N-terminal signal peptide occupies residues 1–19; that stretch reads MQIALFACFFLSLFNFCSS. Plastocyanin-like domains follow at residues 20–199 and 207–349; these read AIRR…LLVC and ERTQ…VDSC. Residues 20–349 form the F5/8 type A 1 domain; sequence AIRRYYLGAV…MEAYVKVDSC (330 aa). Asn61 carries an N-linked (GlcNAc...) asparagine glycan. An intrachain disulfide couples Cys173 to Cys199. N-linked (GlcNAc...) asparagine glycosylation is found at Asn233 and Asn259. Tyr367 is subject to Sulfotyrosine. Plastocyanin-like domains follow at residues 399–573 and 583–730; these read KTWI…LLIC and NQMM…VSSC. In terms of domain architecture, F5/8 type A 2 spans 399-730; sequence KTWIHYISAE…MTALLKVSSC (332 aa). Asn423 carries an N-linked (GlcNAc...) asparagine glycan. Cys547 and Cys573 are joined by a disulfide. Asn601 carries N-linked (GlcNAc...) asparagine glycosylation. Tyr737, Tyr738, and Tyr742 each carry sulfotyrosine. The segment at 760 to 1640 is b; that stretch reads SFFQNTNHPN…IPPVLKRHQR (881 aa). Residues Asn880, Asn958, Asn1015, Asn1022, Asn1026, Asn1044, Asn1076, Asn1087, Asn1136, Asn1161, Asn1192, Asn1255, Asn1268, Asn1273, Asn1274, Asn1302, Asn1316, Asn1340, and Asn1378 are each glycosylated (N-linked (GlcNAc...) asparagine). Positions 1530-1549 are disordered; the sequence is WNKAKRHGESIKGKTESSKN. The segment covering 1536–1548 has biased composition (basic and acidic residues); sequence HGESIKGKTESSK. A sulfotyrosine mark is found at Tyr1669 and Tyr1687. 2 Plastocyanin-like domains span residues 1683–1845 and 1855–2008; these read KTRH…LLIC and GRQV…SKQC. One can recognise an F5/8 type A 3 domain in the interval 1683-2008; sequence KTRHYFIAAV…TLFLVYSKQC (326 aa). N-linked (GlcNAc...) asparagine glycosylation is present at Asn1797. 3 cysteine pairs are disulfide-bonded: Cys1819-Cys1845, Cys2008-Cys2156, and Cys2161-Cys2313. 2 consecutive F5/8 type C domains span residues 2008 to 2156 and 2161 to 2313; these read CQIP…LMGC and CSIP…ILGC. An N-linked (GlcNAc...) asparagine glycan is attached at Asn2105.

The protein belongs to the multicopper oxidase family. As to quaternary structure, interacts with vWF. vWF binding is essential for the stabilization of F8 in circulation. Post-translationally, the binding of vWF and activation depend on the sulfation of Tyr-1669. In terms of processing, proteolytically cleaved by cathepsin CTSG to produce a partially activated form. Found in most tissues.

Its subcellular location is the secreted. The protein localises to the extracellular space. In terms of biological role, factor VIII, along with calcium and phospholipid, acts as a cofactor for factor IXa when it converts factor X to the activated form, factor Xa. This is Coagulation factor VIII (F8) from Mus musculus (Mouse).